The chain runs to 206 residues: Ras-related protein RABG3e (206 aa).

Residue 15 to 22 (GDSGVGKT) participates in GTP binding. Positions 37–45 (YKATIGADF) match the Effector region motif. Residues 63–67 (DTAGQ), 125–128 (NKID), and 158–159 (SA) contribute to the GTP site. S-geranylgeranyl cysteine attachment occurs at residues Cys-204 and Cys-206. Cys-206 is subject to Cysteine methyl ester.

The protein belongs to the small GTPase superfamily. Rab family.

Its subcellular location is the cell membrane. In terms of biological role, intracellular vesicle trafficking and protein transport. May play a role in adaptation to stress by recylcing macromolecules in specific cellular compartments. The polypeptide is Ras-related protein RABG3e (RABG3E) (Arabidopsis thaliana (Mouse-ear cress)).